Consider the following 372-residue polypeptide: MRSVIADSRRLVVKVGSSLVTNDGRGLDHAAIGRWAAQIAALRAQGKEVVLVSSGAIAEGMQRLGWTKRPREIDELQAAAAVGQMGLAQVYESRFAEHSIQTAQILLTHADLADRERYLNARSTLLTLLRLGVVPIINENDTVVTDEIKFGDNDTLGALVANLIEGDALVILTDQQGLFTADPRKDLTATLVQQADAGALELEAMAGGAGSSLGRGGMLTKILAAKRAAHSGANTVIASGREADVLSRLASGEAIGTQLIARTARMAARKQWMADHLQVRGHVVIDDGAVEKLTEGGKSLLPIGIVGVQGAFARGEVIACLSAAGREVARGLTNYSSAETKLIQRRPSGEIESVLGYMLEPELIHRDNLVLV.

Position 14 (K14) interacts with ATP. Positions 54, 141, and 153 each coordinate substrate. 173-174 (TD) is a binding site for ATP. The PUA domain maps to 280–358 (RGHVVIDDGA…GEIESVLGYM (79 aa)).

The protein belongs to the glutamate 5-kinase family.

The protein localises to the cytoplasm. The enzyme catalyses L-glutamate + ATP = L-glutamyl 5-phosphate + ADP. The protein operates within amino-acid biosynthesis; L-proline biosynthesis; L-glutamate 5-semialdehyde from L-glutamate: step 1/2. Its function is as follows. Catalyzes the transfer of a phosphate group to glutamate to form L-glutamate 5-phosphate. In Paraburkholderia phytofirmans (strain DSM 17436 / LMG 22146 / PsJN) (Burkholderia phytofirmans), this protein is Glutamate 5-kinase.